The primary structure comprises 488 residues: Cobyric acid synthase (488 aa).

Residues 252 to 440 enclose the GATase cobBQ-type domain; sequence VPLIAVLRFP…VHGLFANDRQ (189 aa). Cys334 (nucleophile) is an active-site residue. His432 is a catalytic residue.

It belongs to the CobB/CobQ family. CobQ subfamily.

It participates in cofactor biosynthesis; adenosylcobalamin biosynthesis. Catalyzes amidations at positions B, D, E, and G on adenosylcobyrinic A,C-diamide. NH(2) groups are provided by glutamine, and one molecule of ATP is hydrogenolyzed for each amidation. This Methylorubrum populi (strain ATCC BAA-705 / NCIMB 13946 / BJ001) (Methylobacterium populi) protein is Cobyric acid synthase.